The sequence spans 108 residues: Nitrogenase-stabilizing/protective protein NifW (108 aa).

It belongs to the NifW family. Homotrimer; associates with NifD.

Its function is as follows. May protect the nitrogenase Fe-Mo protein from oxidative damage. In Zymomonas mobilis subsp. mobilis (strain ATCC 31821 / ZM4 / CP4), this protein is Nitrogenase-stabilizing/protective protein NifW.